The sequence spans 46 residues: AICKKPSKFFKGACGRDADCEKACDQENWPGGVCVPFLRCECQRSC.

Intrachain disulfides connect C3/C46, C14/C34, C20/C40, and C24/C42.

In terms of tissue distribution, leaves and flowers.

Functionally, strong inhibiting activity against C.beticola and other filamentous fungi. Little or no effect against bacteria. The chain is Defensin-like protein AX1 from Beta vulgaris (Sugar beet).